The sequence spans 410 residues: NADH-quinone oxidoreductase subunit D (410 aa).

The protein belongs to the complex I 49 kDa subunit family. As to quaternary structure, NDH-1 is composed of 14 different subunits. Subunits NuoB, C, D, E, F, and G constitute the peripheral sector of the complex.

It is found in the cell inner membrane. The enzyme catalyses a quinone + NADH + 5 H(+)(in) = a quinol + NAD(+) + 4 H(+)(out). Functionally, NDH-1 shuttles electrons from NADH, via FMN and iron-sulfur (Fe-S) centers, to quinones in the respiratory chain. The immediate electron acceptor for the enzyme in this species is believed to be ubiquinone. Couples the redox reaction to proton translocation (for every two electrons transferred, four hydrogen ions are translocated across the cytoplasmic membrane), and thus conserves the redox energy in a proton gradient. This is NADH-quinone oxidoreductase subunit D from Nitratiruptor sp. (strain SB155-2).